Reading from the N-terminus, the 155-residue chain is Putative pre-16S rRNA nuclease (155 aa).

This sequence belongs to the YqgF nuclease family.

It is found in the cytoplasm. Functionally, could be a nuclease involved in processing of the 5'-end of pre-16S rRNA. The protein is Putative pre-16S rRNA nuclease of Xanthomonas campestris pv. campestris (strain 8004).